A 1171-amino-acid chain; its full sequence is Myosin-B/C (1171 aa).

The Myosin motor domain occupies 105-780 (ETVDDIGYLP…AAKELSILQR (676 aa)). 199-206 (GESGAGKT) is an ATP binding site. The actin-binding stretch occupies residues 671 to 681 (AHFIRCLKPNE). A tail region spans residues 810-1171 (IHFLTRLESN…CFEACAPDRP (362 aa)).

It belongs to the TRAFAC class myosin-kinesin ATPase superfamily. Myosin family.

It is found in the cytoplasm. Its function is as follows. Myosins are actin-based motor molecules with ATPase activity. Unconventional myosins serve in intracellular movements. Their highly divergent tails are presumed to bind to membranous compartments, which would be moved relative to actin filaments. Plays a role in proper daughter cell budding and separation. The sequence is that of Myosin-B/C from Toxoplasma gondii.